The following is a 143-amino-acid chain: Lysozyme C (143 aa).

The signal sequence occupies residues 1-15; sequence MRCLLLLLLVPVPGA. One can recognise a C-type lysozyme domain in the interval 16–143; that stretch reads KVFERCEWAR…LSSYVAGCGV (128 aa). Cystine bridges form between Cys21-Cys141, Cys45-Cys129, Cys79-Cys94, and Cys90-Cys108. Active-site residues include Glu50 and Asp67.

It belongs to the glycosyl hydrolase 22 family. In terms of assembly, monomer.

The protein localises to the secreted. The catalysed reaction is Hydrolysis of (1-&gt;4)-beta-linkages between N-acetylmuramic acid and N-acetyl-D-glucosamine residues in a peptidoglycan and between N-acetyl-D-glucosamine residues in chitodextrins.. Its function is as follows. Lysozymes have primarily a bacteriolytic function; those in tissues and body fluids are associated with the monocyte-macrophage system and enhance the activity of immunoagents. This chain is Lysozyme C (lys), found in Scophthalmus maximus (Turbot).